The primary structure comprises 143 residues: Large ribosomal subunit protein uL13 (143 aa).

Belongs to the universal ribosomal protein uL13 family. In terms of assembly, part of the 50S ribosomal subunit.

In terms of biological role, this protein is one of the early assembly proteins of the 50S ribosomal subunit, although it is not seen to bind rRNA by itself. It is important during the early stages of 50S assembly. The protein is Large ribosomal subunit protein uL13 of Methanosarcina acetivorans (strain ATCC 35395 / DSM 2834 / JCM 12185 / C2A).